The primary structure comprises 1214 residues: Spliceosome-associated protein 130 A (1214 aa).

Residues 817-848 are disordered; that stretch reads AGGVGENGNGNADQMENGADDEDKEDPLSDEQ. The segment covering 834–845 has biased composition (acidic residues); the sequence is GADDEDKEDPLS.

Belongs to the RSE1 family. As to quaternary structure, identified in the spliceosome C complex. Component of the U11/U12 snRNPs that are part of the U12-type spliceosome. Component of splicing factor SF3B complex. Expressed at low levels in roots, leaves, inflorescence and, to a lower extent, in siliques.

Its subcellular location is the nucleus. In terms of biological role, subunit of the splicing factor SF3B required for 'A' complex assembly formed by the stable binding of U2 snRNP to the branchpoint sequence (BPS) in pre-mRNA. Sequence independent binding of SF3A/SF3B complex upstream of the branch site is essential, it may anchor U2 snRNP to the pre-mRNA. May also be involved in the assembly of the 'E' complex. Also belongs to the minor U12-dependent spliceosome, which is involved in the splicing of rare class of nuclear pre-mRNA intron. Required for pollen and ovule development, especially during the transition from microspore to the bicellular stage in pollen development. Involved in the accumulation of QRT1 and QRT3. The protein is Spliceosome-associated protein 130 A of Arabidopsis thaliana (Mouse-ear cress).